We begin with the raw amino-acid sequence, 30 residues long: Propionyl-CoA carboxylase alpha chain (30 aa).

The 30-residue stretch at 1–30 (PKIRKVLVANRGEIAIRVMRTXKELGIATV) folds into the Biotin carboxylation domain.

In terms of assembly, dodecamer composed of six biotin-containing alpha subunits and six beta subunits. It depends on Mg(2+) as a cofactor. Mn(2+) serves as cofactor. Biotin is required as a cofactor.

The catalysed reaction is propanoyl-CoA + hydrogencarbonate + ATP = (S)-methylmalonyl-CoA + ADP + phosphate + H(+). Its pathway is metabolic intermediate metabolism; propanoyl-CoA degradation; succinyl-CoA from propanoyl-CoA: step 1/3. In terms of biological role, this is one of the 2 subunits of the biotin-dependent propionyl-CoA carboxylase (PCC), the enzyme catalyzing the carboxylation of propionyl-CoA/propanoyl-CoA to D-methylmalonyl-CoA/(S)-methylmalonyl-CoA. Within the holoenzyme, the alpha subunit catalyzes the ATP-dependent carboxylation of the biotin carried by the biotin carboxyl carrier (BCC) domain, while the beta subunit then transfers the carboxyl group from carboxylated biotin to propionyl-CoA. Propionyl-CoA carboxylase also carboxylates acetyl-CoA, butyryl-CoA and succinyl-CoA. In Myxococcus xanthus, this protein is Propionyl-CoA carboxylase alpha chain.